A 470-amino-acid polypeptide reads, in one-letter code: Poly(A) polymerase catalytic subunit (470 aa).

Residues aspartate 192 and aspartate 194 contribute to the active site.

Belongs to the poxviridae poly(A) polymerase catalytic subunit family. As to quaternary structure, heterodimer of a large (catalytic) subunit and a small (regulatory) subunit.

It catalyses the reaction RNA(n) + ATP = RNA(n)-3'-adenine ribonucleotide + diphosphate. Polymerase that creates the 3'-poly(A) tail of mRNA's. This chain is Poly(A) polymerase catalytic subunit (PAPL), found in Homo sapiens (Human).